A 188-amino-acid chain; its full sequence is UPF0301 protein MCA2336 2 (188 aa).

The protein belongs to the UPF0301 (AlgH) family.

The polypeptide is UPF0301 protein MCA2336 2 (Methylococcus capsulatus (strain ATCC 33009 / NCIMB 11132 / Bath)).